Here is a 226-residue protein sequence, read N- to C-terminus: Putative mitochondrial outer membrane protein porin 5 (226 aa).

The protein belongs to the eukaryotic mitochondrial porin (TC 1.B.8.1) family.

The protein localises to the mitochondrion outer membrane. Its function is as follows. Putative channel that allows diffusion of small hydrophilic molecules through membranes. The sequence is that of Putative mitochondrial outer membrane protein porin 5 (VDAC5) from Arabidopsis thaliana (Mouse-ear cress).